Consider the following 377-residue polypeptide: uncharacterized protein (377 aa).

A signal peptide spans 1 to 23 (MLKFRNFFKLTLLTLASAFFLSG). Cys24 carries N-palmitoyl cysteine lipidation. Cys24 carries S-diacylglycerol cysteine lipidation.

It is found in the cell membrane. This is an uncharacterized protein from Mycoplasma genitalium (strain ATCC 33530 / DSM 19775 / NCTC 10195 / G37) (Mycoplasmoides genitalium).